The following is an 839-amino-acid chain: Protein translocase subunit SecA (839 aa).

Residues Gln85, 103-107, and Asp493 contribute to the ATP site; that span reads GEGKT. Residues 780-790 are compositionally biased toward basic and acidic residues; it reads QIHEQERERAS. Positions 780-839 are disordered; it reads QIHEQERERASQRATTAAPQNIQSQQSANTDDLPKVERNEACPCGSGKKFKNCHGRKSFS. The span at 791-809 shows a compositional bias: polar residues; that stretch reads QRATTAAPQNIQSQQSANT. The Zn(2+) site is built by Cys821, Cys823, Cys832, and His833. The segment covering 827–839 has biased composition (basic residues); sequence KKFKNCHGRKSFS.

Belongs to the SecA family. As to quaternary structure, monomer and homodimer. Part of the essential Sec protein translocation apparatus which comprises SecA, SecYEG and auxiliary proteins SecDF. Other proteins may also be involved. Zn(2+) is required as a cofactor.

It localises to the cell membrane. Its subcellular location is the cytoplasm. The catalysed reaction is ATP + H2O + cellular proteinSide 1 = ADP + phosphate + cellular proteinSide 2.. Functionally, part of the Sec protein translocase complex. Interacts with the SecYEG preprotein conducting channel. Has a central role in coupling the hydrolysis of ATP to the transfer of proteins into and across the cell membrane, serving as an ATP-driven molecular motor driving the stepwise translocation of polypeptide chains across the membrane. The sequence is that of Protein translocase subunit SecA from Streptococcus pyogenes serotype M6 (strain ATCC BAA-946 / MGAS10394).